The sequence spans 503 residues: Hemogen (503 aa).

Basic residues-rich tracts occupy residues Met1 to Leu10 and Lys61 to Gln79. Residues Met1–Val129 are disordered. Positions Arg7–Glu87 are necessary for nuclear localization. Phosphoserine is present on residues Ser90, Ser103, Ser124, Ser153, Ser158, Ser171, Ser213, Ser223, Ser228, Ser241, and Ser269. The residue at position 286 (Thr286) is a Phosphothreonine. A disordered region spans residues Gln381–Phe503. Residues Gln385–Glu396 are compositionally biased toward low complexity. A phosphoserine mark is found at Ser387 and Ser394. Residues Cys426–Leu436 are compositionally biased toward basic and acidic residues.

In terms of tissue distribution, expressed in hematopoietic precursor cells. Highly expressed in bone marrow, the red pulp of the spleen and round spermatids. Weakly expressed in peripheral blood cells.

It is found in the nucleus. Functionally, regulates the proliferation and differentiation of hematopoietic cells. Overexpression block the TPA-induced megakaryocytic differentiation in the K562 cell model. May also prevent cell apoptosis through the activation of the nuclear factor-kappa B (NF-kB). The chain is Hemogen (Hemgn) from Mus musculus (Mouse).